The primary structure comprises 181 residues: Bifunctional protein PyrR (181 aa).

Residues 41 to 42 (TR), Arg-82, Arg-86, 103 to 111 (DDVLYTGRT), Arg-136, and Val-160 each bind substrate. The PRPP-binding signature appears at 99–111 (IVLVDDVLYTGRT).

This sequence belongs to the purine/pyrimidine phosphoribosyltransferase family. PyrR subfamily.

The catalysed reaction is UMP + diphosphate = 5-phospho-alpha-D-ribose 1-diphosphate + uracil. Probably regulates transcriptional attenuation of the pyrimidine nucleotide (pyr) operon in response to exogenous pyrimidines. In contrast to pyr attenuation in Bacillus, PyrR from Thermus could act as a translational repressor: the binding of PyrR at its proposed recognition site in the transcript would prevent initiation of translation of the leader peptide, resulting in terminator formation and reduced expression of downstream genes. Also displays uracil phosphoribosyltransferase activity. The sequence is that of Bifunctional protein PyrR (pyrR) from Thermus thermophilus (strain ATCC BAA-163 / DSM 7039 / HB27).